Reading from the N-terminus, the 131-residue chain is Profilin-11 (131 aa).

Cys13 and Cys115 are disulfide-bonded. An Involved in PIP2 interaction motif is present at residues 81-97; it reads AVIRGKKGSGGITVKKT. Thr111 carries the phosphothreonine modification.

This sequence belongs to the profilin family. As to quaternary structure, occurs in many kinds of cells as a complex with monomeric actin in a 1:1 ratio. Post-translationally, phosphorylated by MAP kinases.

Its subcellular location is the cytoplasm. The protein localises to the cytoskeleton. Binds to actin and affects the structure of the cytoskeleton. At high concentrations, profilin prevents the polymerization of actin, whereas it enhances it at low concentrations. The sequence is that of Profilin-11 from Zea mays (Maize).